Consider the following 362-residue polypeptide: NAD(P)H-quinone oxidoreductase subunit 1, chloroplastic (362 aa).

The next 8 helical transmembrane spans lie at 29 to 49 (ILPILTLLLGITIEVLVIVWL), 103 to 123 (IAVISILLSFLVIPLGYHFVL), 128 to 148 (IGVFLWIAISSIAPIGLLMAG), 164 to 184 (AAQSISYEIPLTFCVLAISLL), 202 to 222 (FFGWNIWRQPIGFLVFLISSL), 247 to 267 (YSGIKYGLFYLVSYLNLLVSS), 303 to 323 (TIGIFITLTKAYLFLFISITI), and 335 to 355 (LLNLGWKFLLPISLGNLLLTT).

It belongs to the complex I subunit 1 family. In terms of assembly, NDH is composed of at least 16 different subunits, 5 of which are encoded in the nucleus.

Its subcellular location is the plastid. The protein resides in the chloroplast thylakoid membrane. The catalysed reaction is a plastoquinone + NADH + (n+1) H(+)(in) = a plastoquinol + NAD(+) + n H(+)(out). The enzyme catalyses a plastoquinone + NADPH + (n+1) H(+)(in) = a plastoquinol + NADP(+) + n H(+)(out). Its function is as follows. NDH shuttles electrons from NAD(P)H:plastoquinone, via FMN and iron-sulfur (Fe-S) centers, to quinones in the photosynthetic chain and possibly in a chloroplast respiratory chain. The immediate electron acceptor for the enzyme in this species is believed to be plastoquinone. Couples the redox reaction to proton translocation, and thus conserves the redox energy in a proton gradient. This is NAD(P)H-quinone oxidoreductase subunit 1, chloroplastic from Agrostis stolonifera (Creeping bentgrass).